A 698-amino-acid polypeptide reads, in one-letter code: UvrABC system protein B (698 aa).

Residues 35–210 (ARLQAGEKDI…TFRVRGDTVE (176 aa)) enclose the Helicase ATP-binding domain. An ATP-binding site is contributed by 48 to 55 (GATGTGKS). The Beta-hairpin motif lies at 101–124 (YYDYYQPEAYVPSSDTYIEKDSSI). One can recognise a Helicase C-terminal domain in the interval 438 to 604 (QIDDLLAEIN…PLRKRIGDIT (167 aa)). Residues 654 to 689 (AELIQELTDQMHVAAGELQFEVAARLRDEISDLKKE) form the UVR domain.

Belongs to the UvrB family. Forms a heterotetramer with UvrA during the search for lesions. Interacts with UvrC in an incision complex.

Its subcellular location is the cytoplasm. The UvrABC repair system catalyzes the recognition and processing of DNA lesions. A damage recognition complex composed of 2 UvrA and 2 UvrB subunits scans DNA for abnormalities. Upon binding of the UvrA(2)B(2) complex to a putative damaged site, the DNA wraps around one UvrB monomer. DNA wrap is dependent on ATP binding by UvrB and probably causes local melting of the DNA helix, facilitating insertion of UvrB beta-hairpin between the DNA strands. Then UvrB probes one DNA strand for the presence of a lesion. If a lesion is found the UvrA subunits dissociate and the UvrB-DNA preincision complex is formed. This complex is subsequently bound by UvrC and the second UvrB is released. If no lesion is found, the DNA wraps around the other UvrB subunit that will check the other stand for damage. This is UvrABC system protein B from Beutenbergia cavernae (strain ATCC BAA-8 / DSM 12333 / CCUG 43141 / JCM 11478 / NBRC 16432 / NCIMB 13614 / HKI 0122).